Here is a 474-residue protein sequence, read N- to C-terminus: Trigger factor (474 aa).

One can recognise a PPIase FKBP-type domain in the interval 171–258 (GDVAVIDFQG…LKELKTRDLP (88 aa)). The tract at residues 441–474 (TEVDAASATVETTATETAEEAPEAPKAKKGKKKA) is disordered. The segment covering 444–456 (DAASATVETTATE) has biased composition (low complexity).

This sequence belongs to the FKBP-type PPIase family. Tig subfamily.

It localises to the cytoplasm. It carries out the reaction [protein]-peptidylproline (omega=180) = [protein]-peptidylproline (omega=0). In terms of biological role, involved in protein export. Acts as a chaperone by maintaining the newly synthesized protein in an open conformation. Functions as a peptidyl-prolyl cis-trans isomerase. In Synechococcus sp. (strain ATCC 27144 / PCC 6301 / SAUG 1402/1) (Anacystis nidulans), this protein is Trigger factor.